Here is a 210-residue protein sequence, read N- to C-terminus: MLLWGRWKVVAGLAGLALSLELLLRYMRRRKPIREVLFFPAPVTCIEPVLYPMKQCSCPLPHTDSAFSRLLLLLLRAQRSLELCVFTFSCPSLARAVLLLHSRGVRVRVITDNDYMAASGSQIGPLRSAGVAVRHDQSSGYMHHKFAVVDGTVVLTGSLNWTVQATQTNRENILITDDRVIVKAYQQEFERLWQEYDPASYDFFPEKENK.

The Mitochondrial intermembrane portion of the chain corresponds to 1–6 (MLLWGR). A helical membrane pass occupies residues 7-24 (WKVVAGLAGLALSLELLL). The Cytoplasmic segment spans residues 25–210 (RYMRRRKPIR…YDFFPEKENK (186 aa)). The region spanning 138 to 165 (SSGYMHHKFAVVDGTVVLTGSLNWTVQA) is the PLD phosphodiesterase domain. Active-site residues include His-143, Lys-145, and Asp-150.

This sequence belongs to the phospholipase D family. MitoPLD/Zucchini subfamily. In terms of assembly, homodimer.

It localises to the mitochondrion outer membrane. The enzyme catalyses a cardiolipin + H2O = a 1,2-diacyl-sn-glycero-3-phospho-(1'-sn-glycerol) + a 1,2-diacyl-sn-glycero-3-phosphate + H(+). Presents phospholipase and nuclease activities, depending on the different physiological conditions. Plays a key role in mitochondrial fusion and fission via its phospholipase activity. In its phospholipase role, it uses the mitochondrial lipid cardiolipin as substrate to generate phosphatidate (PA or 1,2-diacyl-sn-glycero-3-phosphate), a second messenger signaling lipid. Production of PA facilitates Mitofusin-mediated fusion, whereas the cleavage of PA by the Lipin family of phosphatases produces diacylgycerol (DAG) which promotes mitochondrial fission. Regulates mitochondrial shape through facilitating mitochondrial fusion. During spermatogenesis, plays a critical role in PIWI-interacting RNA (piRNA) biogenesis. piRNAs provide essential protection against the activity of mobile genetic elements. piRNA-mediated transposon silencing is thus critical for maintaining genome stability, in particular in germline cells when transposons are mobilized as a consequence of wide-spread genomic demethylation. Has been shown to be a backbone-non-specific, single strand-specific nuclease, cleaving either RNA or DNA substrates with similar affinity. Produces 5' phosphate and 3' hydroxyl termini, suggesting it could directly participate in the processing of primary piRNA transcripts. Has been proposed to act as a cardiolipin hydrolase to generate phosphatidic acid at mitochondrial surface. Although it cannot be excluded that it can act as a phospholipase in some circumstances, this activity could not be confirmed. This Xenopus tropicalis (Western clawed frog) protein is Mitochondrial cardiolipin hydrolase (pld6).